A 761-amino-acid chain; its full sequence is 5-methyltetrahydropteroyltriglutamate--homocysteine methyltransferase (761 aa).

Residues 16–19 and K118 contribute to the 5-methyltetrahydropteroyltri-L-glutamate site; that span reads RELK. L-homocysteine contacts are provided by residues 436–438 and E489; that span reads IGS. Residues 436–438 and E489 each bind L-methionine; that span reads IGS. Residues 520–521 and W566 contribute to the 5-methyltetrahydropteroyltri-L-glutamate site; that span reads RC. An L-homocysteine-binding site is contributed by D604. D604 is an L-methionine binding site. E610 is a binding site for 5-methyltetrahydropteroyltri-L-glutamate. Positions 646, 648, and 670 each coordinate Zn(2+). The Proton donor role is filled by H699. C731 lines the Zn(2+) pocket.

It belongs to the vitamin-B12 independent methionine synthase family. Requires Zn(2+) as cofactor.

The enzyme catalyses 5-methyltetrahydropteroyltri-L-glutamate + L-homocysteine = tetrahydropteroyltri-L-glutamate + L-methionine. The protein operates within amino-acid biosynthesis; L-methionine biosynthesis via de novo pathway; L-methionine from L-homocysteine (MetE route): step 1/1. Catalyzes the transfer of a methyl group from 5-methyltetrahydrofolate to homocysteine resulting in methionine formation. This chain is 5-methyltetrahydropteroyltriglutamate--homocysteine methyltransferase, found in Vibrio cholerae serotype O1 (strain ATCC 39315 / El Tor Inaba N16961).